The following is a 384-amino-acid chain: Viral protein 1 (384 aa).

This is Viral protein 1 from Chaetoceros setoense (Chaetoceros setoense DNA virus).